A 249-amino-acid polypeptide reads, in one-letter code: Major phosphate-irrepressible acid phosphatase (249 aa).

The N-terminal stretch at 1-20 is a signal peptide; the sequence is MKKNIIAGCLFSLFSLSALA.

This sequence belongs to the class A bacterial acid phosphatase family. Homotetramer.

It localises to the periplasm. It catalyses the reaction a phosphate monoester + H2O = an alcohol + phosphate. This chain is Major phosphate-irrepressible acid phosphatase (phoC), found in Morganella morganii (Proteus morganii).